We begin with the raw amino-acid sequence, 245 residues long: Ribonuclease PH (245 aa).

Residues R86 and 124-126 contribute to the phosphate site; that span reads GTR.

The protein belongs to the RNase PH family. As to quaternary structure, homohexameric ring arranged as a trimer of dimers.

It carries out the reaction tRNA(n+1) + phosphate = tRNA(n) + a ribonucleoside 5'-diphosphate. In terms of biological role, phosphorolytic 3'-5' exoribonuclease that plays an important role in tRNA 3'-end maturation. Removes nucleotide residues following the 3'-CCA terminus of tRNAs; can also add nucleotides to the ends of RNA molecules by using nucleoside diphosphates as substrates, but this may not be physiologically important. Probably plays a role in initiation of 16S rRNA degradation (leading to ribosome degradation) during starvation. The sequence is that of Ribonuclease PH from Bacillus cytotoxicus (strain DSM 22905 / CIP 110041 / 391-98 / NVH 391-98).